The sequence spans 454 residues: UDP-N-acetylmuramoylalanine--D-glutamate ligase (454 aa).

114-120 (GTNGKTT) contributes to the ATP binding site.

It belongs to the MurCDEF family.

It localises to the cytoplasm. It catalyses the reaction UDP-N-acetyl-alpha-D-muramoyl-L-alanine + D-glutamate + ATP = UDP-N-acetyl-alpha-D-muramoyl-L-alanyl-D-glutamate + ADP + phosphate + H(+). The protein operates within cell wall biogenesis; peptidoglycan biosynthesis. Cell wall formation. Catalyzes the addition of glutamate to the nucleotide precursor UDP-N-acetylmuramoyl-L-alanine (UMA). The polypeptide is UDP-N-acetylmuramoylalanine--D-glutamate ligase (Desulfitobacterium hafniense (strain DSM 10664 / DCB-2)).